The primary structure comprises 29 residues: uncharacterized protein (29 aa).

The helical transmembrane segment at 7–27 (FSLVTTIIVLGLIVAVGLTAA) threads the bilayer.

It is found in the cell inner membrane. This is an uncharacterized protein from Escherichia coli O6:K15:H31 (strain 536 / UPEC).